Reading from the N-terminus, the 142-residue chain is Large ribosomal subunit protein uL11 (142 aa).

Belongs to the universal ribosomal protein uL11 family. Part of the ribosomal stalk of the 50S ribosomal subunit. Interacts with L10 and the large rRNA to form the base of the stalk. L10 forms an elongated spine to which L12 dimers bind in a sequential fashion forming a multimeric L10(L12)X complex. In terms of processing, one or more lysine residues are methylated.

Its function is as follows. Forms part of the ribosomal stalk which helps the ribosome interact with GTP-bound translation factors. This Actinobacillus succinogenes (strain ATCC 55618 / DSM 22257 / CCUG 43843 / 130Z) protein is Large ribosomal subunit protein uL11.